Reading from the N-terminus, the 1343-residue chain is ABC multidrug transporter atrD (1343 aa).

Residues 1–10 (MSPLETNPLS) are compositionally biased toward polar residues. The interval 1 to 67 (MSPLETNPLS…HRPKSSSSNN (67 aa)) is disordered. Low complexity predominate over residues 20–31 (ETSTTEEQASTP). N-linked (GlcNAc...) asparagine glycosylation occurs at asparagine 99. Transmembrane regions (helical) follow at residues 114-134 (ILIMVISTICAIAAGAALPLF), 163-183 (YFVYLGIGEFVTVYVSTVGFI), 235-255 (KVGLTLTALATFVTAFIIAYV), and 263-283 (ICSSTIVALVLTMGGGSQFII). An ABC transmembrane type-1 1 domain is found at 115–403 (LIMVISTICA…VSPNAQAFTN (289 aa)). Asparagine 309 carries N-linked (GlcNAc...) asparagine glycosylation. 2 helical membrane-spanning segments follow: residues 339–359 (IVMGFMIGAMFGLMYSNYGLG) and 366–386 (FLVDGAVDVGDILTVLMAILI). Residues 438–683 (IELRNVKHIY…GGAYRKLVEA (246 aa)) enclose the ABC transporter 1 domain. 473-480 (GPSGSGKS) contributes to the ATP binding site. Residue asparagine 545 is glycosylated (N-linked (GlcNAc...) asparagine). 2 helical membrane passes run 773–793 (MLIGLVFSVLAGGGQPTQAVL) and 820–840 (LMFFVVGIIQFITQSTNGAAF). The ABC transmembrane type-1 2 domain occupies 774 to 1063 (LIGLVFSVLA…VFSFAPDMGK (290 aa)). A glycan (N-linked (GlcNAc...) asparagine) is linked at asparagine 872. The next 4 membrane-spanning stretches (helical) occupy residues 887–907 (HLSGVSGVTLGTILMTSTTLG), 920–942 (LALVCISVVPVLLACGFYRFYML), 1010–1030 (ALVFFCVALGFWYGGTLLGHH), and 1037–1057 (FFVCFSEILFGAQSAGTVFSF). N-linked (GlcNAc...) asparagine glycosylation is present at asparagine 1083. The ABC transporter 2 domain maps to 1098-1336 (IEFRNVHFRY…KGRYYELVNL (239 aa)). 1133 to 1140 (GPSGCGKS) is a binding site for ATP.

The protein belongs to the ABC transporter superfamily. ABCB family. Multidrug resistance exporter (TC 3.A.1.201) subfamily.

The protein resides in the cell membrane. Fenamirol efflux transporter activity is inhibited by the cyclosporin derivative PSC 833, nigericin, reserpine and valinomycin. The effect of reserpine is transiant, while that of the cyclosporin derivative PSC 833, nigericin and valinomycin is proportional to the time of exposure. Cyclohexinmide has inhibitory effect only when applied prior to addition of the fungicide. Its function is as follows. Pleiotropic ABC efflux transporter involved in the protection of the cells against a wide range of toxic compounds. Confers resistance to the azole fenarimol via efflux transport. May also be involved in the secretion of penicillin. This is ABC multidrug transporter atrD from Emericella nidulans (strain FGSC A4 / ATCC 38163 / CBS 112.46 / NRRL 194 / M139) (Aspergillus nidulans).